A 257-amino-acid polypeptide reads, in one-letter code: Aquaporin TIP4-2 (257 aa).

2 helical membrane-spanning segments follow: residues 32 to 52 (LVLT…AGAG) and 63 to 83 (TLAA…TAGF). Positions 91 to 93 (NPA) match the NPA 1 motif. 3 consecutive transmembrane segments (helical) span residues 107–127 (LRAL…CILL), 150–170 (GLVM…AMIL), and 178–198 (TIGP…GGNF). Residues 204-206 (NPA) carry the NPA 2 motif. A helical transmembrane segment spans residues 225–245 (WIGPLLGGSLAGFVYESLFMV).

It belongs to the MIP/aquaporin (TC 1.A.8) family. TIP (TC 1.A.8.10) subfamily.

The protein resides in the vacuole membrane. Functionally, aquaporins facilitate the transport of water and small neutral solutes across cell membranes. In Zea mays (Maize), this protein is Aquaporin TIP4-2 (TIP4-2).